The following is a 311-amino-acid chain: Urease accessory protein UreD (311 aa).

It belongs to the UreD family. As to quaternary structure, ureD, UreF and UreG form a complex that acts as a GTP-hydrolysis-dependent molecular chaperone, activating the urease apoprotein by helping to assemble the nickel containing metallocenter of UreC. The UreE protein probably delivers the nickel.

It is found in the cytoplasm. Required for maturation of urease via the functional incorporation of the urease nickel metallocenter. The protein is Urease accessory protein UreD of Parasynechococcus marenigrum (strain WH8102).